Here is a 318-residue protein sequence, read N- to C-terminus: Cuticle collagen dpy-7 (318 aa).

Triple-helical region regions lie at residues 101–130 (GPIG…DGLD), 147–206 (GPPG…PGDD), 209–235 (GGTG…NGLP), and 240–278 (GPPG…PGGH). Residues 101–318 (GPIGPPGVSG…GYSGGGYGKK (218 aa)) form a disordered region. A compositionally biased stretch (low complexity) spans 187–204 (PQGEPGEQGEPGIKGPPG). Composition is skewed to pro residues over residues 216 to 228 (PPGP…PKGP) and 250 to 268 (PPGP…PFGP). Positions 309–318 (GYSGGGYGKK) are enriched in gly residues.

The protein belongs to the cuticular collagen family. In terms of assembly, collagen polypeptide chains are complexed within the cuticle by disulfide bonds and other types of covalent cross-links.

Nematode cuticles are composed largely of collagen-like proteins. The cuticle functions both as an exoskeleton and as a barrier to protect the worm from its environment. Mutations in dpy-7 affects the body shape. This chain is Cuticle collagen dpy-7 (dpy-7), found in Caenorhabditis elegans.